Here is a 490-residue protein sequence, read N- to C-terminus: DNA-binding protein D-ETS-3 (490 aa).

Disordered stretches follow at residues 190-255 (TASS…SGGG) and 271-294 (SSTQ…SQLR). Residues 196-207 (HVEHKVRADKST) show a composition bias toward basic and acidic residues. Residues 211–227 (ATTSSHAAAPSSSSSAS) are compositionally biased toward low complexity. The segment covering 244–255 (GTGGGASASGGG) has biased composition (gly residues). A compositionally biased stretch (low complexity) spans 271-280 (SSTQSQGYSS). The ETS DNA-binding region spans 317 to 397 (IQLWQFLLEL…HGKRYAYKFD (81 aa)).

This sequence belongs to the ETS family. In terms of tissue distribution, embryonic ventral nervous system, higher in the thoracic than abdominal segments.

It is found in the nucleus. In Drosophila melanogaster (Fruit fly), this protein is DNA-binding protein D-ETS-3 (Ets65A).